The following is a 346-amino-acid chain: D-fructose 1,6-bisphosphatase class 2/sedoheptulose 1,7-bisphosphatase (346 aa).

Residues Asp33, Glu57, Asp97, and Glu100 each coordinate Mn(2+). Substrate-binding positions include 100–102, Tyr131, 176–178, and 198–200; these read EGT, RDR, and DGD. Glu225 is a Mn(2+) binding site.

This sequence belongs to the FBPase class 2 family. As to quaternary structure, homotetramer. The cofactor is Mn(2+).

It catalyses the reaction beta-D-fructose 1,6-bisphosphate + H2O = beta-D-fructose 6-phosphate + phosphate. It carries out the reaction D-sedoheptulose 1,7-bisphosphate + H2O = D-sedoheptulose 7-phosphate + phosphate. It functions in the pathway carbohydrate biosynthesis; Calvin cycle. Functionally, catalyzes the hydrolysis of fructose 1,6-bisphosphate (Fru 1,6-P2) and sedoheptulose 1,7-bisphosphate (Sed 1,7-P2) to fructose 6-phosphate and sedoheptulose 7-phosphate, respectively. The polypeptide is D-fructose 1,6-bisphosphatase class 2/sedoheptulose 1,7-bisphosphatase (Gloeobacter violaceus (strain ATCC 29082 / PCC 7421)).